Consider the following 380-residue polypeptide: NF-kappa-B inhibitor-like protein 1 (380 aa).

The tract at residues 1–34 is disordered; it reads MSNPSPQVPEEEASTSVCRPKSSMASTSRRQRRE. 2 ANK repeats span residues 64-93 and 97-133; these read GQPP…DPAH and HGDT…IKNK. 2 disordered regions span residues 131–166 and 185–293; these read KNKD…EWRQ and GDAS…RGSL. S150 bears the Phosphoserine mark. The span at 237–286 shows a compositional bias: basic and acidic residues; it reads QQEEEQRLFRERARAKEEELRESRARRAQEALGDREPKPTRAGPREEHPR.

In terms of assembly, interacts with CACTIN (via N-terminal domain); the interaction occurs in a pro-inflammatory-independent manner.

The protein resides in the nucleus. Its function is as follows. Involved in the regulation of innate immune response. Acts as negative regulator of Toll-like receptor and interferon-regulatory factor (IRF) signaling pathways. Contributes to the negative regulation of transcriptional activation of NF-kappa-B target genes in response to endogenous pro-inflammatory stimuli. The protein is NF-kappa-B inhibitor-like protein 1 (NFKBIL1) of Pan troglodytes (Chimpanzee).